A 314-amino-acid polypeptide reads, in one-letter code: Olfactory receptor 51G2 (314 aa).

The Extracellular portion of the chain corresponds to 1–30 (MTLGSLGNSSSSVSATFLLSGIPGLERMHI). Asn-8 carries an N-linked (GlcNAc...) asparagine glycan. A helical membrane pass occupies residues 31-51 (WISIPLCFMYLVSIPGNCTIL). Over 52 to 59 (FIIKTERS) the chain is Cytoplasmic. A helical membrane pass occupies residues 60-80 (LHEPMYLFLSMLALIDLGLSL). The Extracellular portion of the chain corresponds to 81-104 (CTLPTVLGIFWVGAREISHDACFA). The cysteines at positions 102 and 194 are disulfide-linked. Residues 105–125 (QLFFIHCFSFLESSVLLSMAF) traverse the membrane as a helical segment. Residues 126–144 (DRFVAICHPLHYVSILTNT) are Cytoplasmic-facing. The helical transmembrane segment at 145-165 (VIGRIGLVSLGRSVALIFPLP) threads the bilayer. Topologically, residues 166–201 (FMLKRFPYCGSPVLSHSYCLHQEVMKLACADMKANS) are extracellular. A helical transmembrane segment spans residues 202–222 (IYGMFVIVSTVGIDSLLILFS). Over 223–242 (YALILRTVLSIASRAERFKA) the chain is Cytoplasmic. Residues 243 to 263 (LNTCVSHICAVLLFYTPMIGL) traverse the membrane as a helical segment. The Extracellular segment spans residues 264 to 278 (SVIHRFGKQAPHLVQ). A helical transmembrane segment spans residues 279-299 (VVMGFMYLLFPPVMNPIVYSV). Residues 300-314 (KTKQIRDRVTHAFCY) are Cytoplasmic-facing.

This sequence belongs to the G-protein coupled receptor 1 family.

Its subcellular location is the cell membrane. Its function is as follows. Odorant receptor. The sequence is that of Olfactory receptor 51G2 (OR51G2) from Homo sapiens (Human).